The chain runs to 301 residues: MGAQLSTLSRVVLSPVWFVYSLFMKLFQRSSPAITLENPDIKYPLRLIDKEIISHDTRRFRFALPSPQHILGLPIGQHIYLSTRIDGNLVIRPYTPVSSDDDKGFVDLVVKVYFKDTHPKFPAGGKMSQYLENMNIGDTIEFRGPNGLLVYQGKGKFAIRADKKSNPVVRTVKSVGMIAGGTGITPMLQVIRAVLKDPNDHTVCYLLFANQSEKDILLRPELEELRNEHSSRFKLWYTVDKAPDAWDYSQGFVNEEMIRDHLPPPGEETLILMCGPPPMIQFACLPNLERVGHPKERCFTF.

Glycine 2 carries N-myristoyl glycine lipidation. The FAD-binding FR-type domain maps to 40-152 (DIKYPLRLID…RGPNGLLVYQ (113 aa)). Lysine 42 is subject to N6-acetyllysine. Tyrosine 43 is modified (phosphotyrosine). Lysine 50 carries the N6-acetyllysine modification. FAD contacts are provided by arginine 92, proline 93, tyrosine 94, valine 109, lysine 111, and phenylalanine 114. Lysine 120 is subject to N6-acetyllysine. FAD is bound by residues lysine 126, methionine 127, serine 128, and threonine 185.

This sequence belongs to the flavoprotein pyridine nucleotide cytochrome reductase family. As to quaternary structure, component of a complex composed of cytochrome b5, NADH-cytochrome b5 reductase (CYB5R3) and MTARC2. Interacts with MTLN; the interaction is required to maintain cellular lipid composition and leads to stimulation of mitochondrial respiratory complex I activity. FAD is required as a cofactor. Post-translationally, myristoylated. As to expression, ubiquitously expressed. In terms of tissue distribution, expressed only in erythroid tissues, reticulocytes and liver.

It is found in the endoplasmic reticulum membrane. It localises to the mitochondrion outer membrane. The protein resides in the cytoplasm. The enzyme catalyses 2 Fe(III)-[cytochrome b5] + NADH = 2 Fe(II)-[cytochrome b5] + NAD(+) + H(+). Its function is as follows. Catalyzes the reduction of two molecules of cytochrome b5 using NADH as the electron donor. The protein is NADH-cytochrome b5 reductase 3 of Rattus norvegicus (Rat).